Here is a 269-residue protein sequence, read N- to C-terminus: MDKLILGRYIPGNSIIHRLDPRSKLLAMIIYIIIIFWANNVVTNLLLLAFTLLLIFLSQIKWSFFFNGVKPMIGIILFTTLFQVFFTQGGSVLFQLGIIKITSLGLSQAILIFMRFVLIIFFSTLLTLTTTPLSLSDAVEALLKPLVRFKVPAHEIGLMLSLSLRFVPTLMDDTTRIMNAQKARGVDFGEGNLIQKVKSIIPILIPLFASSFKRADALAIAMEARGYQGGDSRTKYRLLSWQLKDTLAIILVVILGIFLFCLKSPSRLT.

The next 5 membrane-spanning stretches (helical) occupy residues 28-48, 49-69, 73-93, 109-129, and 246-266; these read MIIYIIIIFWANNVVTNLLLL, AFTLLLIFLSQIKWSFFFNGV, IGIILFTTLFQVFFTQGGSVL, AILIFMRFVLIIFFSTLLTLT, and TLAIILVVILGIFLFCLKSPS.

Belongs to the energy-coupling factor EcfT family. As to quaternary structure, forms a stable energy-coupling factor (ECF) transporter complex composed of 2 membrane-embedded substrate-binding proteins (S component), 2 ATP-binding proteins (A component) and 2 transmembrane proteins (T component). May be able to interact with more than 1 S component at a time.

The protein resides in the cell membrane. In terms of biological role, transmembrane (T) component of an energy-coupling factor (ECF) ABC-transporter complex. Unlike classic ABC transporters this ECF transporter provides the energy necessary to transport a number of different substrates. The chain is Energy-coupling factor transporter transmembrane protein EcfT from Streptococcus equi subsp. equi (strain 4047).